The sequence spans 354 residues: Regulatory protein RapD (354 aa).

6 TPR repeats span residues 64–105 (FENQ…VKTA), 107–126 (KHAV…IHNT), 130–163 (ADLY…YLHQ), 171–204 (ITCK…TQQL), 211–244 (CHAY…QEFE), and 321–353 (IEAW…FIMR).

It belongs to the Rap family.

Its subcellular location is the cytoplasm. This chain is Regulatory protein RapD (rapD), found in Bacillus subtilis (strain 168).